Here is a 152-residue protein sequence, read N- to C-terminus: Deoxyuridine 5'-triphosphate nucleotidohydrolase (152 aa).

Substrate is bound by residues 72 to 74, asparagine 85, and 89 to 91; these read RSG and TID.

Belongs to the dUTPase family. Mg(2+) is required as a cofactor.

The catalysed reaction is dUTP + H2O = dUMP + diphosphate + H(+). It functions in the pathway pyrimidine metabolism; dUMP biosynthesis; dUMP from dCTP (dUTP route): step 2/2. Functionally, this enzyme is involved in nucleotide metabolism: it produces dUMP, the immediate precursor of thymidine nucleotides and it decreases the intracellular concentration of dUTP so that uracil cannot be incorporated into DNA. This is Deoxyuridine 5'-triphosphate nucleotidohydrolase from Rhodopseudomonas palustris (strain BisB18).